The chain runs to 395 residues: ATP phosphoribosyltransferase regulatory subunit (395 aa).

This sequence belongs to the class-II aminoacyl-tRNA synthetase family. HisZ subfamily. As to quaternary structure, heteromultimer composed of HisG and HisZ subunits.

The protein resides in the cytoplasm. It functions in the pathway amino-acid biosynthesis; L-histidine biosynthesis; L-histidine from 5-phospho-alpha-D-ribose 1-diphosphate: step 1/9. Required for the first step of histidine biosynthesis. May allow the feedback regulation of ATP phosphoribosyltransferase activity by histidine. This chain is ATP phosphoribosyltransferase regulatory subunit, found in Pseudomonas fluorescens (strain Pf0-1).